Reading from the N-terminus, the 339-residue chain is Flap endonuclease 1 (339 aa).

Residues 1-99 (MGVNLKEIVD…VAWEKRKKHK (99 aa)) are N-domain. Mg(2+) contacts are provided by aspartate 29, aspartate 81, glutamate 153, glutamate 155, aspartate 174, aspartate 176, and aspartate 237. Positions 117-258 (EAIKYAKSLG…TAIEIVKRFG (142 aa)) are I-domain. The interval 329–337 (NQKTLFSFF) is interaction with PCNA.

It belongs to the XPG/RAD2 endonuclease family. FEN1 subfamily. In terms of assembly, interacts with PCNA. PCNA stimulates the nuclease activity without altering cleavage specificity. It depends on Mg(2+) as a cofactor.

Functionally, structure-specific nuclease with 5'-flap endonuclease and 5'-3' exonuclease activities involved in DNA replication and repair. During DNA replication, cleaves the 5'-overhanging flap structure that is generated by displacement synthesis when DNA polymerase encounters the 5'-end of a downstream Okazaki fragment. Binds the unpaired 3'-DNA end and kinks the DNA to facilitate 5' cleavage specificity. Cleaves one nucleotide into the double-stranded DNA from the junction in flap DNA, leaving a nick for ligation. Also involved in the base excision repair (BER) pathway. Acts as a genome stabilization factor that prevents flaps from equilibrating into structures that lead to duplications and deletions. Also possesses 5'-3' exonuclease activity on nicked or gapped double-stranded DNA. This chain is Flap endonuclease 1, found in Nanoarchaeum equitans (strain Kin4-M).